Reading from the N-terminus, the 168-residue chain is Transcription antitermination protein NusB (168 aa).

It belongs to the NusB family.

In terms of biological role, involved in transcription antitermination. Required for transcription of ribosomal RNA (rRNA) genes. Binds specifically to the boxA antiterminator sequence of the ribosomal RNA (rrn) operons. The protein is Transcription antitermination protein NusB of Chlamydia trachomatis serovar L2 (strain ATCC VR-902B / DSM 19102 / 434/Bu).